The sequence spans 363 residues: 3-dehydroquinate synthase (363 aa).

NAD(+)-binding positions include 72–77, 130–131, Lys-142, and Lys-151; these read SGEKEK and TT. Residues Glu-184, His-247, and His-264 each coordinate Zn(2+).

The protein belongs to the sugar phosphate cyclases superfamily. Dehydroquinate synthase family. It depends on Co(2+) as a cofactor. Zn(2+) is required as a cofactor. NAD(+) serves as cofactor.

The protein localises to the cytoplasm. The enzyme catalyses 7-phospho-2-dehydro-3-deoxy-D-arabino-heptonate = 3-dehydroquinate + phosphate. It functions in the pathway metabolic intermediate biosynthesis; chorismate biosynthesis; chorismate from D-erythrose 4-phosphate and phosphoenolpyruvate: step 2/7. Functionally, catalyzes the conversion of 3-deoxy-D-arabino-heptulosonate 7-phosphate (DAHP) to dehydroquinate (DHQ). In Bacillus thuringiensis (strain Al Hakam), this protein is 3-dehydroquinate synthase.